We begin with the raw amino-acid sequence, 404 residues long: Odorant receptor 67c (404 aa).

At 1 to 45 (METAKDNTARTFMELMRVPVQFYRTIGEDIYAHRSTNPLKSLLFK) the chain is on the cytoplasmic side. A helical transmembrane segment spans residues 46 to 66 (IYLYAGFINFNLLVIGELVFF). Residues 67 to 79 (YNSIQDFETIRLA) lie on the Extracellular side of the membrane. The helical transmembrane segment at 80–100 (IAVAPCIGFSLVADFKQAAMI) threads the bilayer. At 101–139 (RGKKTLIMLLDDLENMHPKTLAKQMEYKLPDFEKTMKRV) the chain is on the cytoplasmic side. The helical transmembrane segment at 140–160 (INIFTFLCLAYTTTFSFYPAI) threads the bilayer. At 161–204 (KASVKFNFLGYDTFDRNFGFLIWFPFDATRNNLIYWIMYWDIAH) the chain is on the extracellular side. The chain crosses the membrane as a helical span at residues 205–225 (GAYLAGIAFLCADLLLVVVIT). At 226–277 (QICMHFNYISMRLEDHPCNSNEDKENIEFLIGIIRYHDKCLKLCEHVNDLYS) the chain is on the cytoplasmic side. A helical transmembrane segment spans residues 278 to 298 (FSLLLNFLMASMQICFIAFQV). Over 299-304 (TESTVE) the chain is Extracellular. A helical membrane pass occupies residues 305–326 (VIIIYCIFLMTSMVQVFMVCYY). Residues 327–373 (GDTLIAASLKVGDAAYNQKWFQCSKSYCTMLKLLIMRSQKPASIRPP) lie on the Cytoplasmic side of the membrane. A helical transmembrane segment spans residues 374-394 (TFPPISLVTYMKVISMSYQFF). Topologically, residues 395–404 (ALLRTTYSNN) are extracellular.

Belongs to the insect chemoreceptor superfamily. Heteromeric odorant receptor channel (TC 1.A.69) family. Or49a subfamily. As to quaternary structure, interacts with Orco. Complexes exist early in the endomembrane system in olfactory sensory neurons (OSNs), coupling these complexes to the conserved ciliary trafficking pathway. Expressed in olfactory sensory neurons in the antenna.

The protein localises to the cell membrane. In terms of biological role, odorant receptor which mediates acceptance or avoidance behavior, depending on its substrates. The odorant receptor repertoire encodes a large collection of odor stimuli that vary widely in identity, intensity, and duration. May form a complex with Orco to form odorant-sensing units, providing sensitive and prolonged odorant signaling and calcium permeability. This chain is Odorant receptor 67c (Or67c), found in Drosophila melanogaster (Fruit fly).